A 1194-amino-acid chain; its full sequence is Protein argonaute 3 (1194 aa).

Residues 1–98 (MDRGGYRGGR…GRGGGGDRGR (98 aa)) show a composition bias toward basic and acidic residues. Disordered stretches follow at residues 1 to 277 (MDRG…VSQS) and 299 to 341 (TVLP…DKGG). A compositionally biased stretch (low complexity) spans 142–158 (PPSSSQAQVSQGVAPGD). The span at 167-180 (VGRDGVGDVGRDGV) shows a compositional bias: basic and acidic residues. Positions 181-214 (GDVGQGGVGDVGQVGVGDVGQGGVGDVGQGGVGD) are enriched in gly residues. Residues 215-228 (VGRDGVGDVGRDGV) show a composition bias toward basic and acidic residues. The segment covering 229–238 (GDVGRGGVGD) has biased composition (gly residues). Composition is skewed to low complexity over residues 256-277 (QLQQ…VSQS) and 299-316 (TVLP…HTAS). Polar residues predominate over residues 317–326 (GSQVMTPKPS). The span at 327-341 (SSDKKEPVKRPDKGG) shows a compositional bias: basic and acidic residues. Residues 540–656 (SVIEYLKLYF…VPMEFCNLVE (117 aa)) form the PAZ domain. A Piwi domain is found at 841-1145 (LVLCAMTGKH…AASRGRVYYE (305 aa)).

It belongs to the argonaute family. Ago subfamily.

In terms of biological role, involved in RNA-mediated post-transcriptional gene silencing (PTGS). Main component of the RNA-induced silencing complex (RISC) that binds to a short guide RNA such as a microRNA (miRNA) or small interfering RNA (siRNA). RISC uses the mature miRNA or siRNA as a guide for slicer-directed cleavage of homologous mRNAs to repress gene expression. In Arabidopsis thaliana (Mouse-ear cress), this protein is Protein argonaute 3 (AGO3).